Consider the following 518-residue polypeptide: D-aminopeptidase (518 aa).

Catalysis depends on Ser62, which acts as the Nucleophile. Lys65 acts as the Proton donor/acceptor in catalysis. The tract at residues 373 to 392 is disordered; sequence FGTGPEKMDISGENEAQSSM. Residues 477 to 487 form an important for specificity region; that stretch reads QRSMDAPSPGE. Residue Asp481 coordinates substrate.

It belongs to the peptidase S12 family. As to quaternary structure, homodimer.

It catalyses the reaction Release of an N-terminal D-amino acid from a peptide, Xaa-|-Yaa-, in which Xaa is preferably D-Ala, D-Ser or D-Thr. D-amino acid amides and methyl esters also are hydrolyzed, as is glycine amide.. Inhibited by beta-lactam compounds such as 6-aminopenicillic acid, 7-aminocephalosporanic acid, benzylpenicillin and ampicillin. Inhibited by p-chloromercuribenzoate. Hydrolyzes N-terminal residues in D-amino acid-containing peptides. The protein is D-aminopeptidase of Brucella melitensis biotype 2 (strain ATCC 23457).